The chain runs to 241 residues: Demethylmenaquinone methyltransferase (241 aa).

2 residues coordinate S-adenosyl-L-methionine: threonine 73 and aspartate 92.

Belongs to the class I-like SAM-binding methyltransferase superfamily. MenG/UbiE family.

The catalysed reaction is a 2-demethylmenaquinol + S-adenosyl-L-methionine = a menaquinol + S-adenosyl-L-homocysteine + H(+). The protein operates within quinol/quinone metabolism; menaquinone biosynthesis; menaquinol from 1,4-dihydroxy-2-naphthoate: step 2/2. In terms of biological role, methyltransferase required for the conversion of demethylmenaquinol (DMKH2) to menaquinol (MKH2). This chain is Demethylmenaquinone methyltransferase, found in Chlorobaculum parvum (strain DSM 263 / NCIMB 8327) (Chlorobium vibrioforme subsp. thiosulfatophilum).